A 401-amino-acid polypeptide reads, in one-letter code: Beta-ketoadipyl-CoA thiolase (401 aa).

Cys90 acts as the Acyl-thioester intermediate in catalysis. Active-site proton acceptor residues include His357 and Cys387.

The protein belongs to the thiolase-like superfamily. Thiolase family.

The enzyme catalyses succinyl-CoA + acetyl-CoA = 3-oxoadipyl-CoA + CoA. Its pathway is aromatic compound metabolism; beta-ketoadipate pathway; acetyl-CoA and succinyl-CoA from 3-oxoadipate: step 2/2. In terms of biological role, catalyzes thiolytic cleavage of beta-ketoadipyl-CoA to succinyl-CoA and acetyl-CoA. This chain is Beta-ketoadipyl-CoA thiolase (catF), found in Acinetobacter baylyi (strain ATCC 33305 / BD413 / ADP1).